Here is a 249-residue protein sequence, read N- to C-terminus: Large ribosomal subunit protein uL4 (249 aa).

Belongs to the universal ribosomal protein uL4 family. Part of the 50S ribosomal subunit.

Its function is as follows. One of the primary rRNA binding proteins, this protein initially binds near the 5'-end of the 23S rRNA. It is important during the early stages of 50S assembly. It makes multiple contacts with different domains of the 23S rRNA in the assembled 50S subunit and ribosome. Forms part of the polypeptide exit tunnel. The polypeptide is Large ribosomal subunit protein uL4 (Methanospirillum hungatei JF-1 (strain ATCC 27890 / DSM 864 / NBRC 100397 / JF-1)).